Consider the following 497-residue polypeptide: Glutamyl-tRNA(Gln) amidotransferase subunit A (497 aa).

Catalysis depends on charge relay system residues lysine 91 and serine 166. Positions 143 to 171 (SSTENSAYGPTHNPWDLERTAGGSGGGSS) are disordered. Serine 190 functions as the Acyl-ester intermediate in the catalytic mechanism.

This sequence belongs to the amidase family. GatA subfamily. Heterotrimer of A, B and C subunits.

It carries out the reaction L-glutamyl-tRNA(Gln) + L-glutamine + ATP + H2O = L-glutaminyl-tRNA(Gln) + L-glutamate + ADP + phosphate + H(+). Functionally, allows the formation of correctly charged Gln-tRNA(Gln) through the transamidation of misacylated Glu-tRNA(Gln) in organisms which lack glutaminyl-tRNA synthetase. The reaction takes place in the presence of glutamine and ATP through an activated gamma-phospho-Glu-tRNA(Gln). The chain is Glutamyl-tRNA(Gln) amidotransferase subunit A from Corynebacterium glutamicum (strain R).